We begin with the raw amino-acid sequence, 499 residues long: Alpha-L-arabinofuranosidase B (499 aa).

The signal sequence occupies residues 1–18 (MFSRRNLVALGLAATVSA). N-linked (GlcNAc...) asparagine glycans are attached at residues Asn-83 and Asn-202.

Belongs to the glycosyl hydrolase 54 family.

It carries out the reaction Hydrolysis of terminal non-reducing alpha-L-arabinofuranoside residues in alpha-L-arabinosides.. The protein operates within glycan metabolism; L-arabinan degradation. Functionally, able to hydrolyze 1,5-, 1,3- and 1,2-alpha-linkages not only in L-arabinofuranosyl oligosaccharides, but also in polysac-charides containing terminal non-reducing L-arabinofuranoses in side chains, like L-arabinan, arabinogalactan and arabinoxylan. The protein is Alpha-L-arabinofuranosidase B (abfB) of Aspergillus niger.